A 222-amino-acid polypeptide reads, in one-letter code: Charged multivesicular body protein 3 (222 aa).

A lipid anchor (N-myristoyl glycine) is attached at Gly2. Residues 2-113 are intramolecular interaction with C-terminus; that stretch reads GLFGKTQEKP…LQKSTEVMKA (112 aa). Residues 22–54 are a coiled coil; it reads KIRKEMRVVDRQIRDIQREEEKVKRSVKDAAKK. 2 important for autoinhibitory function regions span residues 59–64 and 168–169; these read VCVVLA and IL. Residues 149-222 adopt a coiled-coil conformation; that stretch reads ESMDDQEEME…MQSRLATLRS (74 aa). The tract at residues 151-220 is intramolecular interaction with N-terminus; the sequence is MDDQEEMEEA…EAMQSRLATL (70 aa). The interaction with VPS4A stretch occupies residues 151–222; the sequence is MDDQEEMEEA…MQSRLATLRS (72 aa). A Glycyl lysine isopeptide (Lys-Gly) (interchain with G-Cter in ubiquitin) cross-link involves residue Lys179. The disordered stretch occupies residues 180-222; that stretch reads APSKVTDALPEPEPLGAMAASEDEEEEEEALEAMQSRLATLRS. 3 interaction with STAMBP regions span residues 196-222, 203-207, and 221-222; these read AMAA…TLRS, EEEEE, and RS. Ser200 is subject to Phosphoserine. Over residues 200–210 the composition is skewed to acidic residues; the sequence is SEDEEEEEEAL. Positions 201 to 211 match the MIT-interacting motif motif; sequence EDEEEEEEALE.

The protein belongs to the SNF7 family. Probable core component of the endosomal sorting required for transport complex III (ESCRT-III). ESCRT-III components are thought to multimerize to form a flat lattice on the perimeter membrane of the endosome. Several assembly forms of ESCRT-III may exist that interact and act sequentially. Forms a metastable monomer in solution; its core structure (without part of the putative autoinhibitory C-terminal acidic region) oligomerizes into a flat lattice via two different dimerization interfaces. In vitro, heteromerizes with CHMP2A (but not CHMP4) to form helical tubular structures that expose membrane-interacting sites on the outside whereas VPS4B can associate on the inside of the tubule. May interact with IGFBP7; the relevance of such interaction however remains unclear. Interacts with CHMP2A. Interacts with CHMP4A; the interaction requires the release of CHMP4A autoinhibition. Interacts with VPS4A. Interacts with STAMBP; the interaction appears to relieve the autoinhibition of CHMP3. Interacts with VTA1.

The protein resides in the cytoplasm. It is found in the cytosol. Its subcellular location is the membrane. It localises to the endosome. The protein localises to the late endosome membrane. In terms of biological role, probable core component of the endosomal sorting required for transport complex III (ESCRT-III) which is involved in multivesicular bodies (MVBs) formation and sorting of endosomal cargo proteins into MVBs. MVBs contain intraluminal vesicles (ILVs) that are generated by invagination and scission from the limiting membrane of the endosome and mostly are delivered to lysosomes enabling degradation of membrane proteins, such as stimulated growth factor receptors, lysosomal enzymes and lipids. The MVB pathway appears to require the sequential function of ESCRT-O, -I,-II and -III complexes. ESCRT-III proteins mostly dissociate from the invaginating membrane before the ILV is released. The ESCRT machinery also functions in topologically equivalent membrane fission events, such as the terminal stages of cytokinesis and the budding of enveloped viruses (lentiviruses). ESCRT-III proteins are believed to mediate the necessary vesicle extrusion and/or membrane fission activities, possibly in conjunction with the AAA ATPase VPS4. Selectively binds to phosphatidylinositol 3,5-bisphosphate PtdIns(3,5)P2 and PtdIns(3,4)P2 in preference to other phosphoinositides tested. Involved in late stages of cytokinesis. Plays a role in endosomal sorting/trafficking of EGF receptor. This chain is Charged multivesicular body protein 3 (CHMP3), found in Bos taurus (Bovine).